Reading from the N-terminus, the 325-residue chain is Large ribosomal subunit protein uL1m (325 aa).

The transit peptide at 1–50 (MAATVRCFGRVLIHHQRCSLATVTSQTSLYPCCIYVPVPNRHFAAAAKPA) directs the protein to the mitochondrion. The disordered stretch occupies residues 47–66 (AKPAKKTKKGTKEKASNEKK). A compositionally biased stretch (basic and acidic residues) spans 56–66 (GTKEKASNEKK).

This sequence belongs to the universal ribosomal protein uL1 family.

It localises to the mitochondrion. This Bos taurus (Bovine) protein is Large ribosomal subunit protein uL1m (MRPL1).